Consider the following 495-residue polypeptide: Trimethylamine methyltransferase MttB2 (495 aa).

A non-standard amino acid (pyrrolysine) is located at residue O334.

This sequence belongs to the trimethylamine methyltransferase family. Can form a complex with MttC.

It catalyses the reaction Co(I)-[trimethylamine-specific corrinoid protein] + trimethylamine + H(+) = methyl-Co(III)-[trimethylamine-specific corrinoid protein] + dimethylamine. It functions in the pathway one-carbon metabolism; methanogenesis from trimethylamine. Its function is as follows. Catalyzes the transfer of a methyl group from trimethylamine to the corrinoid cofactor of MttC. This is Trimethylamine methyltransferase MttB2 (mttB2) from Methanosarcina mazei (strain ATCC BAA-159 / DSM 3647 / Goe1 / Go1 / JCM 11833 / OCM 88) (Methanosarcina frisia).